The sequence spans 177 residues: Large ribosomal subunit protein uL6 (177 aa).

In terms of assembly, part of the 50S ribosomal subunit.

In terms of biological role, this protein binds to the 23S rRNA, and is important in its secondary structure. It is located near the subunit interface in the base of the L7/L12 stalk, and near the tRNA binding site of the peptidyltransferase center. The polypeptide is Large ribosomal subunit protein uL6 (Rhodopseudomonas palustris (strain ATCC BAA-98 / CGA009)).